The following is a 448-amino-acid chain: MILTSNVKLMPGSKVEAVIQISKEFVKAKYNEILKDYSSRLKVKGFRTGRVPFSIIEGKYSDNIRALAIENLIHKSLEEFFESAIYKPLSYAVPKILDEKLEINFDKDFEFTFVYESYPEFEISDISNFKVEIPEVVISDSDIEDELKLLQFENSIIVEDNGSVKVGSIVRVDFVELDDSLNEILATKRQDFVLTVGESDDYYGFGYDIIGMKKDEEKIVEKNYGSDYKFSELANTSKRLKIGVKDIKRRDIPELDDAFAKDVKDSLNTLEDLRDYVRENMLRVVQEKTNSLKLSKLLSGIAEKVNIDVPSSMFEAELKNVINEFSHQNKINITQLQNSSTGLEGVNDVFKENVLNKLKSKLVFQKMVDNDSSEVTELDLENELIKQAQNLKMAPQDVKKFYKERNLFGLLKDEIKRQKVKEKILQDLEEIKLEKVSFRDFVNYKTGE.

The PPIase FKBP-type domain occupies 167-253 (GSIVRVDFVE…VKDIKRRDIP (87 aa)).

This sequence belongs to the FKBP-type PPIase family. Tig subfamily.

The protein resides in the cytoplasm. The enzyme catalyses [protein]-peptidylproline (omega=180) = [protein]-peptidylproline (omega=0). In terms of biological role, involved in protein export. Acts as a chaperone by maintaining the newly synthesized protein in an open conformation. Functions as a peptidyl-prolyl cis-trans isomerase. The protein is Trigger factor of Borrelia recurrentis (strain A1).